The following is a 128-amino-acid chain: Translation initiation factor 5A (128 aa).

At Lys35 the chain carries Hypusine.

Belongs to the eIF-5A family.

Its subcellular location is the cytoplasm. Functions by promoting the formation of the first peptide bond. The protein is Translation initiation factor 5A (eif5a) of Archaeoglobus fulgidus (strain ATCC 49558 / DSM 4304 / JCM 9628 / NBRC 100126 / VC-16).